The primary structure comprises 477 residues: Transposase for insertion sequence element IS231F (477 aa).

The protein belongs to the transposase 11 family.

Functionally, involved in the transposition of the insertion sequence. This is Transposase for insertion sequence element IS231F from Bacillus thuringiensis subsp. israelensis.